We begin with the raw amino-acid sequence, 682 residues long: TPR repeat-containing thioredoxin TTL4 (682 aa).

Disordered regions lie at residues 1–120 (MSHY…GTPL) and 132–157 (NNNN…TGNI). Ser8 is modified (phosphoserine). Residues 16–39 (KFRDSLSFQRDDDVINKPDFRELD) are compositionally biased toward basic and acidic residues. Phosphoserine is present on Ser42. Residues 48 to 71 (GSSSAAATPAASGSSSSSSGSASG) show a composition bias toward low complexity. TPR repeat units follow at residues 211–244 (SEEV…SPEN), 246–278 (AYRS…DPSY), 280–312 (RAHQ…PDQA), 402–435 (AYVL…DHSN), 449–482 (VAKA…DAFN), 483–516 (SVLY…QPSY), and 518–550 (KALL…LPGD). A Thioredoxin domain is found at 587-674 (DKFKTATSLP…MVCPSHQLLE (88 aa)).

In terms of tissue distribution, widely expressed.

Functionally, involved in osmotic and salt stress tolerance. May play a role in the control of meristematic cell size during osmotic stress. This is TPR repeat-containing thioredoxin TTL4 (TTL4) from Arabidopsis thaliana (Mouse-ear cress).